A 468-amino-acid chain; its full sequence is Glutamate--tRNA ligase (468 aa).

Residues 9–19 carry the 'HIGH' region motif; the sequence is PSPTGSIHIGN. The short motif at 239-243 is the 'KMSKS' region element; sequence KLSKR. Lys242 lines the ATP pocket.

This sequence belongs to the class-I aminoacyl-tRNA synthetase family. Glutamate--tRNA ligase type 1 subfamily. In terms of assembly, monomer.

Its subcellular location is the cytoplasm. It catalyses the reaction tRNA(Glu) + L-glutamate + ATP = L-glutamyl-tRNA(Glu) + AMP + diphosphate. Functionally, catalyzes the attachment of glutamate to tRNA(Glu) in a two-step reaction: glutamate is first activated by ATP to form Glu-AMP and then transferred to the acceptor end of tRNA(Glu). This Blochmanniella pennsylvanica (strain BPEN) protein is Glutamate--tRNA ligase.